Consider the following 269-residue polypeptide: Tryptophan synthase alpha chain (269 aa).

Active-site proton acceptor residues include E50 and D61.

The protein belongs to the TrpA family. As to quaternary structure, tetramer of two alpha and two beta chains.

It catalyses the reaction (1S,2R)-1-C-(indol-3-yl)glycerol 3-phosphate + L-serine = D-glyceraldehyde 3-phosphate + L-tryptophan + H2O. Its pathway is amino-acid biosynthesis; L-tryptophan biosynthesis; L-tryptophan from chorismate: step 5/5. Functionally, the alpha subunit is responsible for the aldol cleavage of indoleglycerol phosphate to indole and glyceraldehyde 3-phosphate. In Buchnera aphidicola subsp. Baizongia pistaciae (strain Bp), this protein is Tryptophan synthase alpha chain.